The sequence spans 720 residues: Polyribonucleotide nucleotidyltransferase (720 aa).

Residues aspartate 484 and aspartate 490 each contribute to the Mg(2+) site. The KH domain occupies 551–610 (PRMYKINIDPSKIGSVIGSGGKTIRSIIEQTNTTVDIENDGTVVIGATDEASAKKAIKII). Positions 620 to 688 (GSIYTGKVTR…NQGRVNLSHR (69 aa)) constitute an S1 motif domain. A disordered region spans residues 697 to 720 (PISRNRDSQPRRPGPFRPSDRSNS).

This sequence belongs to the polyribonucleotide nucleotidyltransferase family. Mg(2+) is required as a cofactor.

The protein localises to the cytoplasm. The enzyme catalyses RNA(n+1) + phosphate = RNA(n) + a ribonucleoside 5'-diphosphate. Its function is as follows. Involved in mRNA degradation. Catalyzes the phosphorolysis of single-stranded polyribonucleotides processively in the 3'- to 5'-direction. The chain is Polyribonucleotide nucleotidyltransferase from Dehalococcoides mccartyi (strain CBDB1).